A 284-amino-acid chain; its full sequence is NAD kinase (284 aa).

Asp60 serves as the catalytic Proton acceptor. Residues 60–61 (DG), 134–135 (NE), Arg145, Lys162, Asp164, 175–180 (TAYSFS), and Gln234 contribute to the NAD(+) site.

It belongs to the NAD kinase family. Requires a divalent metal cation as cofactor.

Its subcellular location is the cytoplasm. It carries out the reaction NAD(+) + ATP = ADP + NADP(+) + H(+). Functionally, involved in the regulation of the intracellular balance of NAD and NADP, and is a key enzyme in the biosynthesis of NADP. Catalyzes specifically the phosphorylation on 2'-hydroxyl of the adenosine moiety of NAD to yield NADP. The sequence is that of NAD kinase from Clostridium botulinum (strain Alaska E43 / Type E3).